Reading from the N-terminus, the 679-residue chain is Methionine--tRNA ligase (679 aa).

A 'HIGH' region motif is present at residues 14-24; it reads PYANGSIHLGH. Zn(2+) is bound by residues cysteine 145, cysteine 148, cysteine 158, and cysteine 161. The 'KMSKS' region signature appears at 331-335; sequence KMSKS. Lysine 334 provides a ligand contact to ATP. A tRNA-binding domain is found at 577 to 679; sequence TFAAVDLRVA…SGAKPGQRIK (103 aa).

The protein belongs to the class-I aminoacyl-tRNA synthetase family. MetG type 1 subfamily. As to quaternary structure, homodimer. Requires Zn(2+) as cofactor.

It is found in the cytoplasm. The catalysed reaction is tRNA(Met) + L-methionine + ATP = L-methionyl-tRNA(Met) + AMP + diphosphate. Its function is as follows. Is required not only for elongation of protein synthesis but also for the initiation of all mRNA translation through initiator tRNA(fMet) aminoacylation. The protein is Methionine--tRNA ligase of Pseudomonas putida (strain GB-1).